The sequence spans 163 residues: NADH-quinone oxidoreductase subunit I (163 aa).

2 consecutive 4Fe-4S ferredoxin-type domains span residues 54 to 84 (LRRY…IESD) and 94 to 123 (TRYD…ETHI). Residues C64, C67, C70, C74, C103, C106, C109, and C113 each contribute to the [4Fe-4S] cluster site.

This sequence belongs to the complex I 23 kDa subunit family. In terms of assembly, NDH-1 is composed of 14 different subunits. Subunits NuoA, H, J, K, L, M, N constitute the membrane sector of the complex. [4Fe-4S] cluster is required as a cofactor.

It is found in the cell inner membrane. It carries out the reaction a quinone + NADH + 5 H(+)(in) = a quinol + NAD(+) + 4 H(+)(out). NDH-1 shuttles electrons from NADH, via FMN and iron-sulfur (Fe-S) centers, to quinones in the respiratory chain. The immediate electron acceptor for the enzyme in this species is believed to be ubiquinone. Couples the redox reaction to proton translocation (for every two electrons transferred, four hydrogen ions are translocated across the cytoplasmic membrane), and thus conserves the redox energy in a proton gradient. The polypeptide is NADH-quinone oxidoreductase subunit I (Ralstonia nicotianae (strain ATCC BAA-1114 / GMI1000) (Ralstonia solanacearum)).